Reading from the N-terminus, the 409-residue chain is MNKLNFVILCLAALLVFDATAQQDVHGPFQGQRQNEFDLMFVKEIFKNHNSNVVLSPFSVKILLTLIYEASDTSFGNAVSNTKRELSSVIQNDNIDHTRSYYKQLLESAQQDNKDYDLNIATNFFVDDFIEVINKYQQIANTHYHAMLEKVSYSNPTQTAATINNWVSEHTNGRLREIVTPDSLEGAVITLVNVIYFKGLWTYPFPEVANNVKPFYGTRGKPTNAQYMEQNGQFYYDNSADLGAQILRLPYRGNKLAMYFILPNPDNTVNQVLDRINSASLHQALWYMEENEVNVTLPKFKFDFSEQLNEPLQQVGIREIFSQNASLPLLARGRGARDEVRVSRIFQKAGITINELGSEAYAATEIQLVNKFGGDGVQIFNANRPFIFFIEDETLGTMLFAGKIENPVF.

An N-terminal signal peptide occupies residues 1–21 (MNKLNFVILCLAALLVFDATA). N-linked (GlcNAc...) asparagine glycosylation is found at Asn294 and Asn324. The Hinge region; required for binding to peptidase signature appears at 356-360 (LGSEA).

The protein belongs to the serpin family. As to quaternary structure, forms a covalent heterodimer with protease CLIPB9; the interaction inhibits CLIPB9 protease activity. Forms a covalent heterodimer with protease CLIPB10; the interaction inhibits CLIPB10 catalytic activity. Interacts with CLIPB4 in the hemolymph of immune-challenged female mosquitoes; the interaction results in CLIPB4 inhibition. Protease CLIPB9 binds to SRPN2 via the hinge region resulting in the cleavage of the reactive bond. This leads to a conformational change in SRPN2 which traps CLIPB9 and distorts its active site, resulting in CLIPB9 inactivation.

It localises to the secreted. In terms of biological role, serine protease inhibitor that functions in the melanization-mediated immune response. By preventing the activation of phenoloxidases through the inhibiting of serine proteases CLIPB9, CLIPB10 and CLIPB4, negatively regulates melanization in the hemolymph. By preventing melanization, has a detrimental role during P.berghei parasite mediated-infection and invasion of the mosquito midgut. This chain is Serine protease inhibitor 2, found in Anopheles gambiae (African malaria mosquito).